The chain runs to 117 residues: Ribosome-binding factor A (117 aa).

Belongs to the RbfA family. As to quaternary structure, monomer. Binds 30S ribosomal subunits, but not 50S ribosomal subunits or 70S ribosomes.

It localises to the cytoplasm. Functionally, one of several proteins that assist in the late maturation steps of the functional core of the 30S ribosomal subunit. Associates with free 30S ribosomal subunits (but not with 30S subunits that are part of 70S ribosomes or polysomes). Required for efficient processing of 16S rRNA. May interact with the 5'-terminal helix region of 16S rRNA. This Petrotoga mobilis (strain DSM 10674 / SJ95) protein is Ribosome-binding factor A.